The primary structure comprises 348 residues: Protein RecA (348 aa).

An ATP-binding site is contributed by 64–71; it reads GPESSGKT. Residues 325–335 show a composition bias toward basic and acidic residues; that stretch reads YEIDGANKEPL. Residues 325 to 348 form a disordered region; sequence YEIDGANKEPLEETEETLSLLDDE. Residues 336 to 348 are compositionally biased toward acidic residues; sequence EETEETLSLLDDE.

The protein belongs to the RecA family.

The protein resides in the cytoplasm. Its function is as follows. Can catalyze the hydrolysis of ATP in the presence of single-stranded DNA, the ATP-dependent uptake of single-stranded DNA by duplex DNA, and the ATP-dependent hybridization of homologous single-stranded DNAs. It interacts with LexA causing its activation and leading to its autocatalytic cleavage. This chain is Protein RecA, found in Listeria welshimeri serovar 6b (strain ATCC 35897 / DSM 20650 / CCUG 15529 / CIP 8149 / NCTC 11857 / SLCC 5334 / V8).